Consider the following 89-residue polypeptide: DNA/RNA-binding protein Alba 2 (89 aa).

Lys12 bears the N6-acetyllysine mark.

It belongs to the histone-like Alba family. Post-translationally, acetylated. Acetylation at Lys-12 decreases DNA-binding affinity.

The protein localises to the cytoplasm. It localises to the chromosome. Binds double-stranded DNA tightly but without sequence specificity. Involved in DNA compaction. The chain is DNA/RNA-binding protein Alba 2 from Saccharolobus shibatae (strain ATCC 51178 / DSM 5389 / JCM 8931 / NBRC 15437 / B12) (Sulfolobus shibatae).